We begin with the raw amino-acid sequence, 301 residues long: NAD kinase 2 (301 aa).

The Proton acceptor role is filled by D77. NAD(+) contacts are provided by residues 77-78 (DG), R82, 151-152 (NE), K162, D181, and 192-197 (TAYAFS).

This sequence belongs to the NAD kinase family. A divalent metal cation serves as cofactor.

The protein resides in the cytoplasm. It catalyses the reaction NAD(+) + ATP = ADP + NADP(+) + H(+). Involved in the regulation of the intracellular balance of NAD and NADP, and is a key enzyme in the biosynthesis of NADP. Catalyzes specifically the phosphorylation on 2'-hydroxyl of the adenosine moiety of NAD to yield NADP. The sequence is that of NAD kinase 2 from Streptomyces coelicolor (strain ATCC BAA-471 / A3(2) / M145).